The primary structure comprises 760 residues: Metal transporter cnnm-2 (760 aa).

The first 21 residues, 1-21 (MIIKVFLRLLLLCAHIVCIDG), serve as a signal peptide directing secretion. Residues 22–153 (KLEIRPVVSG…ETFMPVWAQC (132 aa)) are Extracellular-facing. N-linked (GlcNAc...) asparagine glycosylation is present at asparagine 88. In terms of domain architecture, CNNM transmembrane spans 145–323 (TFMPVWAQCA…MENDACDIDL (179 aa)). The helical transmembrane segment at 154-174 (AILCLLFSISALCSGLTLGLM) threads the bilayer. Residues 175 to 208 (ALTPQELSILMKSGSQREKKHAAAIYPIRCHGNR) lie on the Cytoplasmic side of the membrane. The chain crosses the membrane as a helical span at residues 209–229 (LLCTVIIMNVIVNTGITLLFD). Aspartate 230 is a topological domain (extracellular). Residues 231-251 (LAEGLIAFVASTVGIVVFGEI) traverse the membrane as a helical segment. The Cytoplasmic portion of the chain corresponds to 252–261 (LPQSICVKYG). Residues 262–282 (LAVGANTIFITKFFMFLLFPI) form a helical membrane-spanning segment. Over 283-760 (TWPLGKILDK…SVEELKPLME (478 aa)) the chain is Extracellular. N-linked (GlcNAc...) asparagine glycosylation is found at asparagine 302 and asparagine 403. CBS domains lie at 344–406 (MTDI…NITV) and 442–512 (MVAK…ITDE). N-linked (GlcNAc...) asparagine glycans are attached at residues asparagine 528, asparagine 592, and asparagine 667. Residues 708 to 734 (DDFGSPTRKASILDSSPNSRKRSSTSV) are disordered.

The protein belongs to the ACDP family.

It is found in the cell membrane. Its function is as follows. Probable metal transporter. Probably acts redundantly with the other metal transport proteins cnnm-1, cnnm-3, cnnm-4 and cnnm-5 to regulate Mg(2+) homeostasis. In Caenorhabditis elegans, this protein is Metal transporter cnnm-2.